Here is a 250-residue protein sequence, read N- to C-terminus: Phosphoribosylaminoimidazole-succinocarboxamide synthase (250 aa).

This sequence belongs to the SAICAR synthetase family.

It carries out the reaction 5-amino-1-(5-phospho-D-ribosyl)imidazole-4-carboxylate + L-aspartate + ATP = (2S)-2-[5-amino-1-(5-phospho-beta-D-ribosyl)imidazole-4-carboxamido]succinate + ADP + phosphate + 2 H(+). It functions in the pathway purine metabolism; IMP biosynthesis via de novo pathway; 5-amino-1-(5-phospho-D-ribosyl)imidazole-4-carboxamide from 5-amino-1-(5-phospho-D-ribosyl)imidazole-4-carboxylate: step 1/2. The polypeptide is Phosphoribosylaminoimidazole-succinocarboxamide synthase (Synechococcus sp. (strain WH7803)).